The chain runs to 252 residues: MYLVEEAKKVAEMILSSVNAIAFTGAGISTASGIPDFRGPQGLWKKYSPELASIEYFQKYPDAFWQFYSTRMKSLFEAKPNRAHYALAQLEKMGLIKAVITQNVDGLHSVAGSRNVIELHGNMRKSYCTSCLRSYDSLEVLARVEKGEVIPRCECGGILKPDVVLFGEPVHGIYEAMRIANESDLVLAIGSSLTVYPANQIPLIVKRNGGGLIILNGEETPYDEYADLVIRERIEIFLPEVISHIQSLHRSS.

The region spanning 1-248 (MYLVEEAKKV…PEVISHIQSL (248 aa)) is the Deacetylase sirtuin-type domain. Ala-26, Thr-30, Phe-37, Arg-38, Gln-102, Val-104, Asp-105, and His-120 together coordinate NAD(+). A nicotinamide-binding site is contributed by Phe-37. Positions 104 and 105 each coordinate nicotinamide. His-120 serves as the catalytic Proton acceptor. Zn(2+) is bound by residues Cys-128, Cys-131, Cys-153, and Cys-155. NAD(+)-binding residues include Ser-191, Ser-192, Asn-216, and Ile-234.

It belongs to the sirtuin family. Class U subfamily. Requires Zn(2+) as cofactor.

It localises to the cytoplasm. The enzyme catalyses N(6)-acetyl-L-lysyl-[protein] + NAD(+) + H2O = 2''-O-acetyl-ADP-D-ribose + nicotinamide + L-lysyl-[protein]. NAD-dependent protein deacetylase which modulates the activities of several enzymes which are inactive in their acetylated form. Deacetylates the N-terminal lysine residue of Alba, the major archaeal chromatin protein and that, in turn, increases Alba's DNA binding affinity, thereby repressing transcription. This Sulfolobus acidocaldarius (strain ATCC 33909 / DSM 639 / JCM 8929 / NBRC 15157 / NCIMB 11770) protein is NAD-dependent protein deacetylase.